We begin with the raw amino-acid sequence, 148 residues long: RxLR effector protein SFI7 (148 aa).

An N-terminal signal peptide occupies residues 1–22 (MRAYFVLLVAATAILTYGGATA). N32 carries N-linked (GlcNAc...) asparagine glycosylation. The RxLR-dEER motif lies at 44 to 58 (RSLRVAPSGGNGEER).

It belongs to the RxLR effector family.

It is found in the secreted. It localises to the host cytoplasm. The protein resides in the host cell membrane. In terms of biological role, effector that suppresses flg22-induced post-translational MAP kinase activation in tomato but not in Arabidopsis. The perception of highly conserved pathogen- or microbe-associated molecular patterns (PAMPs/MAMPs), such as flg22, triggers converging signaling pathways recruiting MAP kinase cascades and inducing transcriptional re-programming, yielding a generic antimicrobial response. Also partially attenuates INF1-triggered cell death. The protein is RxLR effector protein SFI7 of Phytophthora infestans (strain T30-4) (Potato late blight agent).